Consider the following 394-residue polypeptide: GPI mannosyltransferase 2 (394 aa).

9 helical membrane passes run 2 to 22, 47 to 67, 104 to 124, 132 to 152, 185 to 205, 232 to 252, 293 to 313, 323 to 343, and 371 to 391; these read LWKL…IIYF, YYNV…SVYF, LTSI…LYYL, FGLV…LTGN, SITN…NFTV, IILS…TNIY, IPNF…LGYM, LLPL…FWNI, and YAIG…AAFL.

The protein belongs to the PIGV family.

It is found in the endoplasmic reticulum membrane. It functions in the pathway glycolipid biosynthesis; glycosylphosphatidylinositol-anchor biosynthesis. Functionally, mannosyltransferase involved in glycosylphosphatidylinositol-anchor biosynthesis. Transfers the second mannose to the glycosylphosphatidylinositol during GPI precursor assembly. The polypeptide is GPI mannosyltransferase 2 (GPI18) (Candida albicans (strain SC5314 / ATCC MYA-2876) (Yeast)).